Consider the following 217-residue polypeptide: Cysteine-rich protein 3 (217 aa).

In terms of domain architecture, LIM zinc-binding 1 spans 3 to 64 (WTCPRCQQPV…KPCYGALFGP (62 aa)). Residues 84–112 (PGCTTPLSPSSFSPPRPRTGLPQGKKSPP) are disordered. An LIM zinc-binding 2 domain is found at 122–183 (SLCPGCGEPV…VPCYGYLFGP (62 aa)).

Expressed in most tissues, but not in skeletal muscle.

It localises to the cytoplasm. This is Cysteine-rich protein 3 (CRIP3) from Homo sapiens (Human).